Reading from the N-terminus, the 62-residue chain is UPF0337 protein mll8179 (62 aa).

The tract at residues 1–42 is disordered; sequence MRNMVNKDQVAGLAKQLKGSVKQAAGKATGNRRTQAEGMADK.

It belongs to the UPF0337 (CsbD) family.

This Mesorhizobium japonicum (strain LMG 29417 / CECT 9101 / MAFF 303099) (Mesorhizobium loti (strain MAFF 303099)) protein is UPF0337 protein mll8179.